We begin with the raw amino-acid sequence, 416 residues long: Gamma-glutamyl phosphate reductase (416 aa).

Belongs to the gamma-glutamyl phosphate reductase family.

Its subcellular location is the cytoplasm. The enzyme catalyses L-glutamate 5-semialdehyde + phosphate + NADP(+) = L-glutamyl 5-phosphate + NADPH + H(+). It functions in the pathway amino-acid biosynthesis; L-proline biosynthesis; L-glutamate 5-semialdehyde from L-glutamate: step 2/2. Its function is as follows. Catalyzes the NADPH-dependent reduction of L-glutamate 5-phosphate into L-glutamate 5-semialdehyde and phosphate. The product spontaneously undergoes cyclization to form 1-pyrroline-5-carboxylate. The protein is Gamma-glutamyl phosphate reductase of Vibrio parahaemolyticus serotype O3:K6 (strain RIMD 2210633).